A 755-amino-acid chain; its full sequence is Beta-galactosidase (755 aa).

Glu382 acts as the Proton donor in catalysis. The active-site Nucleophile is Glu463.

This sequence belongs to the glycosyl hydrolase 2 family.

It carries out the reaction Hydrolysis of terminal non-reducing beta-D-galactose residues in beta-D-galactosides.. The polypeptide is Beta-galactosidase (lacZ) (Rhizobium meliloti (Ensifer meliloti)).